The chain runs to 446 residues: tRNA (guanine-N(7)-)-methyltransferase non-catalytic subunit TRM82 (446 aa).

The disordered stretch occupies residues 67–97 (LTQTSEDTEQENTAPYKKQKSSVSKPIKVPK). Positions 87–97 (SSVSKPIKVPK) are enriched in low complexity. 3 WD repeats span residues 107 to 147 (PIYN…TENC), 202 to 243 (GHVS…IVKH), and 247 to 287 (GHRE…LLSK).

The protein belongs to the WD repeat TRM82 family. In terms of assembly, forms a heterodimer with the catalytic subunit TRM8.

The protein localises to the nucleus. The protein operates within tRNA modification; N(7)-methylguanine-tRNA biosynthesis. In terms of biological role, required for the formation of N(7)-methylguanine at position 46 (m7G46) in tRNA. In the complex, it is required to stabilize and induce conformational changes of the catalytic subunit. The sequence is that of tRNA (guanine-N(7)-)-methyltransferase non-catalytic subunit TRM82 from Debaryomyces hansenii (strain ATCC 36239 / CBS 767 / BCRC 21394 / JCM 1990 / NBRC 0083 / IGC 2968) (Yeast).